The following is a 369-amino-acid chain: Phosphate acyltransferase (369 aa).

The protein belongs to the PlsX family. As to quaternary structure, homodimer. Probably interacts with PlsY.

The protein localises to the cytoplasm. It carries out the reaction a fatty acyl-[ACP] + phosphate = an acyl phosphate + holo-[ACP]. It functions in the pathway lipid metabolism; phospholipid metabolism. In terms of biological role, catalyzes the reversible formation of acyl-phosphate (acyl-PO(4)) from acyl-[acyl-carrier-protein] (acyl-ACP). This enzyme utilizes acyl-ACP as fatty acyl donor, but not acyl-CoA. In Gluconobacter oxydans (strain 621H) (Gluconobacter suboxydans), this protein is Phosphate acyltransferase.